The sequence spans 77 residues: MLILTRRVGESLHIGDDIKITLLGIKGNQVRIGIDAPRDVEVHREEIYDRIRRETRKANRRTAEETLDQASRLLSQK.

A disordered region spans residues 58-77 (ANRRTAEETLDQASRLLSQK). The span at 68 to 77 (DQASRLLSQK) shows a compositional bias: polar residues.

This sequence belongs to the CsrA/RsmA family. Homodimer; the beta-strands of each monomer intercalate to form a hydrophobic core, while the alpha-helices form wings that extend away from the core.

It is found in the cytoplasm. A translational regulator that binds mRNA to regulate translation initiation and/or mRNA stability. Usually binds in the 5'-UTR at or near the Shine-Dalgarno sequence preventing ribosome-binding, thus repressing translation. Its main target seems to be the major flagellin gene, while its function is anatagonized by FliW. The sequence is that of Translational regulator CsrA from Magnetococcus marinus (strain ATCC BAA-1437 / JCM 17883 / MC-1).